The chain runs to 155 residues: SsrA-binding protein (155 aa).

The protein belongs to the SmpB family.

Its subcellular location is the cytoplasm. Its function is as follows. Required for rescue of stalled ribosomes mediated by trans-translation. Binds to transfer-messenger RNA (tmRNA), required for stable association of tmRNA with ribosomes. tmRNA and SmpB together mimic tRNA shape, replacing the anticodon stem-loop with SmpB. tmRNA is encoded by the ssrA gene; the 2 termini fold to resemble tRNA(Ala) and it encodes a 'tag peptide', a short internal open reading frame. During trans-translation Ala-aminoacylated tmRNA acts like a tRNA, entering the A-site of stalled ribosomes, displacing the stalled mRNA. The ribosome then switches to translate the ORF on the tmRNA; the nascent peptide is terminated with the 'tag peptide' encoded by the tmRNA and targeted for degradation. The ribosome is freed to recommence translation, which seems to be the essential function of trans-translation. In Streptococcus equi subsp. zooepidemicus (strain MGCS10565), this protein is SsrA-binding protein.